The chain runs to 606 residues: Scavenger receptor class A member 3 (606 aa).

The Cytoplasmic segment spans residues 1 to 56; that stretch reads MKVRSAGSDRDVLCVTEEDLAGEDEDMPSFPCTQEGRAGPRCNRCQKNLSLHTSVR. Residues 57-77 form a helical; Signal-anchor for type II membrane protein membrane-spanning segment; sequence ILYLFLTLLLVAVAVLASLVF. The Extracellular portion of the chain corresponds to 78–606; the sequence is RKVDSLSEDI…PGPPGNQSPY (529 aa). 10 N-linked (GlcNAc...) asparagine glycosylation sites follow: N115, N182, N224, N257, N313, N337, N365, N400, N430, and N451. A disordered region spans residues 455-606; the sequence is IRGVPGPPGP…PGPPGNQSPY (152 aa). 2 Collagen-like domains span residues 456–558 and 559–601; these read RGVP…PGPS and GPQG…GPPG. The span at 497–516 shows a compositional bias: low complexity; that stretch reads PQGQPGEPGPVGERGPAGPR. Residues 526–535 are compositionally biased toward gly residues; sequence GSFGTGGPRG. Pro residues-rich tracts occupy residues 548 to 558 and 591 to 606; these read PEGPPGSPGPS and PGLP…QSPY.

The protein resides in the endoplasmic reticulum membrane. It localises to the golgi apparatus membrane. Functionally, seems to protect cells by scavenging oxidative molecules or harmful products of oxidation. This chain is Scavenger receptor class A member 3 (Scara3), found in Mus musculus (Mouse).